The sequence spans 126 residues: MAVLGLGTDIVEMARIEAVVERSGDRLARRVLSEAEWELYQQHQQPVRFLAKRFAVKEAVAKAFGTGIRNGLAFNQFEVFNDGLGKPNIRLHARAAELAKEMGVTSIHVSLADERRYACATVIIEG.

Mg(2+)-binding residues include Asp9 and Glu58.

Belongs to the P-Pant transferase superfamily. AcpS family. Requires Mg(2+) as cofactor.

Its subcellular location is the cytoplasm. It carries out the reaction apo-[ACP] + CoA = holo-[ACP] + adenosine 3',5'-bisphosphate + H(+). Transfers the 4'-phosphopantetheine moiety from coenzyme A to a Ser of acyl-carrier-protein. In Serratia proteamaculans (strain 568), this protein is Holo-[acyl-carrier-protein] synthase.